The following is a 798-amino-acid chain: General transcription and DNA repair factor IIH helicase/translocase subunit XPB (798 aa).

2 disordered regions span residues 1–62 (MGPP…EQIN) and 235–254 (PPGA…GADG). The Nuclear localization signal motif lies at 6 to 22 (KSRKDRSGGDKFGKKRR). A compositionally biased stretch (basic and acidic residues) spans 10–25 (DRSGGDKFGKKRRAED). Acidic residues predominate over residues 33–42 (DDNDSLDATE). One can recognise a Helicase ATP-binding domain in the interval 343–504 (MFGNGRARSG…DLNFLIGPKL (162 aa)). ATP is bound at residue 360–367 (AGKSLVGV). A DEVH box motif is present at residues 457-460 (DEVH). Positions 558 to 713 (RSCQFLIKYH…KVITHLKGMD (156 aa)) constitute a Helicase C-terminal domain. The interval 746-765 (LPGEPGYRPSGSGGAVRRVG) is disordered.

It belongs to the helicase family. RAD25/XPB subfamily. As to quaternary structure, component of the 7-subunit TFIIH core complex composed of haywire/XPB/ERCC3, XPD/ERCC2, GTF2H1, GTF2H2, GTF2H3, GTF2H4 and GTF2H5, which is active in NER. The core complex associates with the 3-subunit CDK-activating kinase (CAK) module composed of CCNH/cyclin H, CDK7 and MNAT1 to form the 10-subunit holoenzyme (holo-TFIIH) active in transcription. Interacts with PUF60. Interacts with ATF7IP. Interacts with Epstein-Barr virus EBNA2.

It is found in the nucleus. The catalysed reaction is Couples ATP hydrolysis with the unwinding of duplex DNA by translocating in the 3'-5' direction.. The enzyme catalyses ATP + H2O = ADP + phosphate + H(+). Its function is as follows. ATP-dependent 3'-5' DNA helicase/translocase; binds dsDNA rather than ssDNA, unzipping it in a translocase rather than classical helicase activity. Component of the general transcription and DNA repair factor IIH (TFIIH) core complex. When complexed to CDK-activating kinase (CAK), involved in RNA transcription by RNA polymerase II. The ATPase activity of XPB/ERCC3, but not its helicase activity, is required for DNA opening; it may wrap around the damaged DNA wedging it open, causing localized melting and twisting that allows XPD/ERCC2 helicase to anchor. The ATP-dependent helicase activity of XPB/ERCC3 may be required for promoter escape. Also involved in transcription-coupled nucleotide excision repair (NER) of damaged DNA. In NER, TFIIH acts by opening DNA around the lesion to allow the excision of the damaged oligonucleotide and its replacement by a new DNA fragment. The structure of the TFIIH transcription complex differs from the NER-TFIIH complex; large movements by XPD/ERCC2 and XPB/ERCC3 are stabilized by XPA. This chain is General transcription and DNA repair factor IIH helicase/translocase subunit XPB (hay), found in Drosophila melanogaster (Fruit fly).